Here is a 174-residue protein sequence, read N- to C-terminus: Protein FanG (174 aa).

The N-terminal stretch at 1 to 21 (MKKLYKAITVICILMSNLQSA) is a signal peptide. C41 and C75 are joined by a disulfide.

It is found in the fimbrium. Involved in the biosynthesis of K99 fimbriae. The chain is Protein FanG (fanG) from Escherichia coli.